A 116-amino-acid polypeptide reads, in one-letter code: MYELINNFEKKQMKKNIPHLHPGDTVEVKTWVIEGSKKRLQIFEGVVISIKNRGLHSAFTVRKISSGEGVERVFQSHSPVIEEIKIKRFGIVRRAKLYYLRSLSGKSARIKVRMNP.

The protein belongs to the bacterial ribosomal protein bL19 family.

This protein is located at the 30S-50S ribosomal subunit interface and may play a role in the structure and function of the aminoacyl-tRNA binding site. This Blochmanniella pennsylvanica (strain BPEN) protein is Large ribosomal subunit protein bL19.